We begin with the raw amino-acid sequence, 154 residues long: Jupiter microtubule associated homolog 1 (154 aa).

Position 1 is an N-acetylmethionine (Met-1). Over residues 1-19 (MTTTTTFKGVDPNSRNSSR) the composition is skewed to polar residues. Positions 1–154 (MTTTTTFKGV…PGGKSSLVLG (154 aa)) are disordered. The residue at position 2 (Thr-2) is an N-acetylthreonine; in Hematological and neurological expressed 1 protein, N-terminally processed. Phosphoserine occurs at positions 28 and 31. Thr-54 bears the Phosphothreonine mark. Phosphoserine is present on residues Ser-71, Ser-80, Ser-87, Ser-88, and Ser-92. Positions 80–91 (SGPQRRNSSEAN) are enriched in polar residues. The segment covering 96–108 (LDLKGEGDVHENV) has biased composition (basic and acidic residues). The segment covering 125-138 (PAAPVPSPVAPAPV) has biased composition (pro residues). Ser-131 is subject to Phosphoserine. Position 148 is an N6-acetyllysine (Lys-148).

This sequence belongs to the JUPITER family. In terms of assembly, interacts with the complex composed, at least, of APC, CTNNB1 and GSK3B; the interaction takes place with the inactive form of GSK3B (phosphorylated at 'Ser-9').

Its subcellular location is the nucleus. It localises to the cytoplasm. Modulates negatively AKT-mediated GSK3B signaling. Induces CTNNB1 'Ser-33' phosphorylation and degradation through the suppression of the inhibitory 'Ser-9' phosphorylation of GSK3B, which represses the function of the APC:CTNNB1:GSK3B complex and the interaction with CDH1/E-cadherin in adherent junctions. Plays a role in the regulation of cell cycle and cell adhesion. Has an inhibitory role on AR-signaling pathway through the induction of receptor proteasomal degradation. The chain is Jupiter microtubule associated homolog 1 from Bos taurus (Bovine).